The following is a 176-amino-acid chain: Peptide methionine sulfoxide reductase MsrA (176 aa).

Residue Cys10 is part of the active site.

This sequence belongs to the MsrA Met sulfoxide reductase family.

The catalysed reaction is L-methionyl-[protein] + [thioredoxin]-disulfide + H2O = L-methionyl-(S)-S-oxide-[protein] + [thioredoxin]-dithiol. The enzyme catalyses [thioredoxin]-disulfide + L-methionine + H2O = L-methionine (S)-S-oxide + [thioredoxin]-dithiol. Its function is as follows. Has an important function as a repair enzyme for proteins that have been inactivated by oxidation. Catalyzes the reversible oxidation-reduction of methionine sulfoxide in proteins to methionine. The polypeptide is Peptide methionine sulfoxide reductase MsrA (Sulfolobus acidocaldarius (strain ATCC 33909 / DSM 639 / JCM 8929 / NBRC 15157 / NCIMB 11770)).